We begin with the raw amino-acid sequence, 193 residues long: Putative nitroreductase HBN1 (193 aa).

At serine 2 the chain carries N-acetylserine.

Belongs to the nitroreductase family. Requires FMN as cofactor.

It localises to the cytoplasm. It is found in the nucleus. The protein is Putative nitroreductase HBN1 (HBN1) of Saccharomyces cerevisiae (strain ATCC 204508 / S288c) (Baker's yeast).